Consider the following 82-residue polypeptide: Small ribosomal subunit protein bS18 (82 aa).

The protein belongs to the bacterial ribosomal protein bS18 family. In terms of assembly, part of the 30S ribosomal subunit. Forms a tight heterodimer with protein bS6.

Functionally, binds as a heterodimer with protein bS6 to the central domain of the 16S rRNA, where it helps stabilize the platform of the 30S subunit. This chain is Small ribosomal subunit protein bS18, found in Rhizobium meliloti (strain 1021) (Ensifer meliloti).